The chain runs to 348 residues: MADTGSFIHLARPLGPATVGVAPSTAPLNVVIQPQAIFSILDHSLRRNADQERVIGTLLGTRSEDGTEVEIRTCFAVGHTETTDQVEVDMEYQKQMLALHLKANPKEVLVGWYATSSELNTFSALIQNFYGGQGDGTWPHPAVHLTVSTEPGKDIETRTYISAPVGVTAERAADSAAFIPVPYEIRYSEAERNGLEAIAQARDAEDRASSLFTDIETLEKSIEEVLGMIDRVSKYVESVIDEEAPASTALGQFLLNALALAPKVDPADIESDFNKHIQDVLVVSYLANTIRTQMELSNRLATAQLTLGGGDSTAIGGTGAESGGQRGGQRNNRQRGGQQRNQAEELRA.

The MPN domain maps to 30 to 166; the sequence is VVIQPQAIFS…TRTYISAPVG (137 aa). Residues 312–327 show a composition bias toward gly residues; sequence STAIGGTGAESGGQRG. Positions 312 to 348 are disordered; it reads STAIGGTGAESGGQRGGQRNNRQRGGQQRNQAEELRA. Residues 328–341 show a composition bias toward low complexity; the sequence is GQRNNRQRGGQQRN.

This sequence belongs to the eIF-3 subunit F family. Component of the eukaryotic translation initiation factor 3 (eIF-3) complex.

It localises to the cytoplasm. Its function is as follows. Component of the eukaryotic translation initiation factor 3 (eIF-3) complex, which is involved in protein synthesis of a specialized repertoire of mRNAs and, together with other initiation factors, stimulates binding of mRNA and methionyl-tRNAi to the 40S ribosome. The eIF-3 complex specifically targets and initiates translation of a subset of mRNAs involved in cell proliferation. The polypeptide is Eukaryotic translation initiation factor 3 subunit F (Coccidioides immitis (strain RS) (Valley fever fungus)).